A 249-amino-acid polypeptide reads, in one-letter code: tRNA (guanine-N(1)-)-methyltransferase (249 aa).

S-adenosyl-L-methionine contacts are provided by residues glycine 113 and 133 to 138; that span reads IGDYVL.

The protein belongs to the RNA methyltransferase TrmD family. In terms of assembly, homodimer.

Its subcellular location is the cytoplasm. The enzyme catalyses guanosine(37) in tRNA + S-adenosyl-L-methionine = N(1)-methylguanosine(37) in tRNA + S-adenosyl-L-homocysteine + H(+). Its function is as follows. Specifically methylates guanosine-37 in various tRNAs. This Aeromonas salmonicida (strain A449) protein is tRNA (guanine-N(1)-)-methyltransferase.